The primary structure comprises 433 residues: MSTEKFTITEHLVPGSHIREYPGSTVNQQDVLKIHVKNYTPKREGPVPDDAITFIATHGVGLPKELYEPLWDELLDQASGFHIRAIWMADVASMNQSGIHNEDKLSMDCSWMDHARDLLLMINHFRDQMPRPLVGIGHSFGGNIITNLAYLHPRLFTTLLLLDPLIQLSPPSLGFGTDAPSAINYTLWRDDVWPSREEAIRANRAIMQGMDPRCLDRMTKHFFRDLPTPLYPDVEAIKARFGTTADSTTTPVTLTTPKYHELVAQIRQNFNARDPKTGRIEVPRDTHADMDPLVAYIPLYRPEPRSTFRRLETLRPSCLWVIAGATFLNIDEIREGVKICGSGIGGSGGVPDGRVREVVLPGFGHLMPFQEVKTVAGTCVVWLQQEMDRFRQTERQWKEDRDGKSHQAVEENWYKVLKPIPTGRKKRSDKGKL.

The abhydrolase domain stretch occupies residues 58–246 (HGVGLPKELY…IKARFGTTAD (189 aa)). Residue valine 60 participates in substrate binding. Serine 139 (nucleophile) is an active-site residue. Phenylalanine 140 lines the substrate pocket. Residues aspartate 163 and histidine 365 contribute to the active site.

Belongs to the AB hydrolase superfamily. MpaH hydrolase family. In terms of assembly, homodimer.

It localises to the peroxisome matrix. The catalysed reaction is mycophenolyl-CoA + H2O = mycophenolate + CoA + H(+). It functions in the pathway secondary metabolite biosynthesis; terpenoid biosynthesis. In terms of biological role, type I acyl-CoA thioesterase; part of the gene cluster that mediates the biosynthesis of mycophenolic acid (MPA), the first isolated antibiotic natural product in the world obtained from a culture of Penicillium brevicompactum in 1893. MpaH acts as a peroxisomal acyl-CoA hydrolase that converts MPA-CoA into the final product MPA. The first step of the pathway is the synthesis of 5-methylorsellinic acid (5MOA) by the cytosolic polyketide synthase mpaC. 5MOA is then converted to the phthalide compound 5,7-dihydroxy-4,6-dimethylphthalide (DHMP) by the endoplasmic reticulum-bound cytochrome P450 monooxygenase mpaDE. MpaDE first catalyzes hydroxylation of 5-MOA to 4,6-dihydroxy-2-(hydroxymethyl)-3-methylbenzoic acid (DHMB). MpaDE then acts as a lactone synthase that catalyzes the ring closure to convert DHMB into DHMP. The next step is the prenylation of DHMP by the Golgi apparatus-associated prenyltransferase mpaA to yield farnesyl-DHMP (FDHMP). The ER-bound oxygenase mpaB then mediates the oxidative cleavage the C19-C20 double bond in FDHMP to yield FDHMP-3C via a mycophenolic aldehyde intermediate. The O-methyltransferase mpaG catalyzes the methylation of FDHMP-3C to yield MFDHMP-3C. After the cytosolic methylation of FDHMP-3C, MFDHMP-3C enters into peroxisomes probably via free diffusion due to its low molecular weight. Upon a peroxisomal CoA ligation reaction, catalyzed by a beta-oxidation component enzyme acyl-CoA ligase ACL891, MFDHMP-3C-CoA would then be restricted to peroxisomes for the following beta-oxidation pathway steps. The peroxisomal beta-oxidation machinery than converts MFDHMP-3C-CoA into MPA_CoA, via a beta-oxidation chain-shortening process. Finally mpaH acts as a peroxisomal acyl-CoA hydrolase with high substrate specificity toward MPA-CoA to release the final product MPA. This chain is Type I acyl-CoA thioesterase mpaH, found in Penicillium brevicompactum.